We begin with the raw amino-acid sequence, 882 residues long: Translation initiation factor IF-2 (882 aa).

The interval 28-294 (GIRKSADDSV…SSLQQGFQKP (267 aa)) is disordered. Residues 67-81 (STLNIPGTGGKSKSV) are compositionally biased toward polar residues. The span at 92-209 (VKRDPQEAER…RMAEENKWTD (118 aa)) shows a compositional bias: basic and acidic residues. The segment covering 244 to 258 (GRGRNAKAARPKKGN) has biased composition (basic residues). The span at 259-272 (KHAESKADREEARA) shows a compositional bias: basic and acidic residues. The tr-type G domain occupies 381-550 (PRAPVVTIMG…LLQAEVLELK (170 aa)). The G1 stretch occupies residues 390 to 397 (GHVDHGKT). Position 390–397 (390–397 (GHVDHGKT)) interacts with GTP. Positions 415-419 (GITQH) are G2. A G3 region spans residues 436–439 (DTPG). GTP is bound by residues 436–440 (DTPGH) and 490–493 (NKID). Residues 490–493 (NKID) are G4. The tract at residues 526 to 528 (SAK) is G5. An N6-acetyllysine modification is found at Lys-800.

It belongs to the TRAFAC class translation factor GTPase superfamily. Classic translation factor GTPase family. IF-2 subfamily.

Its subcellular location is the cytoplasm. In terms of biological role, one of the essential components for the initiation of protein synthesis. Protects formylmethionyl-tRNA from spontaneous hydrolysis and promotes its binding to the 30S ribosomal subunits. Also involved in the hydrolysis of GTP during the formation of the 70S ribosomal complex. The chain is Translation initiation factor IF-2 from Shigella flexneri serotype 5b (strain 8401).